The following is a 439-amino-acid chain: Histidine--tRNA ligase (439 aa).

The protein belongs to the class-II aminoacyl-tRNA synthetase family. As to quaternary structure, homodimer.

It is found in the cytoplasm. It carries out the reaction tRNA(His) + L-histidine + ATP = L-histidyl-tRNA(His) + AMP + diphosphate + H(+). The sequence is that of Histidine--tRNA ligase from Leptospira interrogans serogroup Icterohaemorrhagiae serovar copenhageni (strain Fiocruz L1-130).